The primary structure comprises 245 residues: Anti-Pycsar protein Apyc1 (245 aa).

The segment at 19–219 (FNNNALLYAG…EIQSQILLKH (201 aa)) is beta-lactamase-like. Zn(2+) contacts are provided by histidine 61, histidine 63, aspartate 65, histidine 66, histidine 145, aspartate 165, and histidine 219.

Belongs to the anti-Pycsar protein Apyc1 family. As to quaternary structure, homodimer. Requires Zn(2+) as cofactor.

It carries out the reaction 3',5'-cyclic CMP + H2O = CMP + H(+). The catalysed reaction is 3',5'-cyclic UMP + H2O = UMP + H(+). Functionally, counteracts the endogenous Pycsar antiviral defense system. Phosphodiesterase that enables metal-dependent hydrolysis of host cyclic nucleotide Pycsar defense signals such as cCMP and cUMP. This chain is Anti-Pycsar protein Apyc1, found in Paenibacillus sp. (strain J14).